Here is a 95-residue protein sequence, read N- to C-terminus: Aspartyl/glutamyl-tRNA(Asn/Gln) amidotransferase subunit C (95 aa).

This sequence belongs to the GatC family. Heterotrimer of A, B and C subunits.

It catalyses the reaction L-glutamyl-tRNA(Gln) + L-glutamine + ATP + H2O = L-glutaminyl-tRNA(Gln) + L-glutamate + ADP + phosphate + H(+). The enzyme catalyses L-aspartyl-tRNA(Asn) + L-glutamine + ATP + H2O = L-asparaginyl-tRNA(Asn) + L-glutamate + ADP + phosphate + 2 H(+). Its function is as follows. Allows the formation of correctly charged Asn-tRNA(Asn) or Gln-tRNA(Gln) through the transamidation of misacylated Asp-tRNA(Asn) or Glu-tRNA(Gln) in organisms which lack either or both of asparaginyl-tRNA or glutaminyl-tRNA synthetases. The reaction takes place in the presence of glutamine and ATP through an activated phospho-Asp-tRNA(Asn) or phospho-Glu-tRNA(Gln). This is Aspartyl/glutamyl-tRNA(Asn/Gln) amidotransferase subunit C from Pseudomonas entomophila (strain L48).